We begin with the raw amino-acid sequence, 273 residues long: Formamidopyrimidine-DNA glycosylase (273 aa).

The Schiff-base intermediate with DNA role is filled by P2. E3 functions as the Proton donor in the catalytic mechanism. K58 (proton donor; for beta-elimination activity) is an active-site residue. DNA contacts are provided by H91 and R110. Residues 238 to 272 (QVYGKTGQPCPRCASMIVKIKLGGRGTHLCPHCQK) form an FPG-type zinc finger. R262 acts as the Proton donor; for delta-elimination activity in catalysis.

The protein belongs to the FPG family. In terms of assembly, monomer. Zn(2+) serves as cofactor.

It catalyses the reaction Hydrolysis of DNA containing ring-opened 7-methylguanine residues, releasing 2,6-diamino-4-hydroxy-5-(N-methyl)formamidopyrimidine.. The enzyme catalyses 2'-deoxyribonucleotide-(2'-deoxyribose 5'-phosphate)-2'-deoxyribonucleotide-DNA = a 3'-end 2'-deoxyribonucleotide-(2,3-dehydro-2,3-deoxyribose 5'-phosphate)-DNA + a 5'-end 5'-phospho-2'-deoxyribonucleoside-DNA + H(+). Functionally, involved in base excision repair of DNA damaged by oxidation or by mutagenic agents. Acts as a DNA glycosylase that recognizes and removes damaged bases. Has a preference for oxidized purines, such as 7,8-dihydro-8-oxoguanine (8-oxoG). Has AP (apurinic/apyrimidinic) lyase activity and introduces nicks in the DNA strand. Cleaves the DNA backbone by beta-delta elimination to generate a single-strand break at the site of the removed base with both 3'- and 5'-phosphates. The sequence is that of Formamidopyrimidine-DNA glycosylase from Streptococcus thermophilus (strain ATCC BAA-250 / LMG 18311).